The following is a 175-amino-acid chain: NADH-ubiquinone oxidoreductase chain 6 (175 aa).

The next 5 helical transmembrane spans lie at 1 to 21, 24 to 44, 46 to 66, 86 to 106, and 149 to 169; these read MMYT…GVSS, SPVY…GIVV, FGGS…MMVV, IVVL…VVYL, and YGCW…FIVI.

The protein belongs to the complex I subunit 6 family. As to quaternary structure, core subunit of respiratory chain NADH dehydrogenase (Complex I) which is composed of 45 different subunits.

It localises to the mitochondrion inner membrane. The enzyme catalyses a ubiquinone + NADH + 5 H(+)(in) = a ubiquinol + NAD(+) + 4 H(+)(out). In terms of biological role, core subunit of the mitochondrial membrane respiratory chain NADH dehydrogenase (Complex I) which catalyzes electron transfer from NADH through the respiratory chain, using ubiquinone as an electron acceptor. Essential for the catalytic activity and assembly of complex I. In Dugong dugon (Dugong), this protein is NADH-ubiquinone oxidoreductase chain 6 (MT-ND6).